Here is a 321-residue protein sequence, read N- to C-terminus: MANIKDIAEKAGVSVTTVSRVINNHPYVSEDKRKRVFEAMESLEYTRNIHAVHLSKGFSNMIGVVLPTVNLPYFAELIAGIADAAAESGVHLSLFQTNYEVQKEIFALSQLKQRQVDGLIFCSKALADEKLMEWEGPILLCQNSDNARFPTISIPHQEAFRNGLDYLIAKGHKKIAICLARKKGMNSHFRIKAYKEALEEIGEAFREDWVIEKAITINDGKALFHKWNTWKEKPTAIFVANDQVSAGLFLEAKNQRVSVPDELAILSVDNHEISQALGITTIDIQTREMGKQAFAILEKRIQGQPIERKVLDYRLIERSTV.

One can recognise an HTH lacI-type domain in the interval 1-56 (MANIKDIAEKAGVSVTTVSRVINNHPYVSEDKRKRVFEAMESLEYTRNIHAVHLSK). The segment at residues 4 to 23 (IKDIAEKAGVSVTTVSRVIN) is a DNA-binding region (H-T-H motif).

This is an uncharacterized protein from Bacillus subtilis (strain 168).